Consider the following 681-residue polypeptide: Envelope glycoprotein (681 aa).

The signal sequence occupies residues 1–18; the sequence is MKTTCLLISLILIQGVKT. Over 19–648 the chain is Extracellular; that stretch reads LPILEIASNI…GLGGKWWTSD (630 aa). Residues 38-188 form a receptor-binding region; it reads SGTLQKTEDV…FSRQGQGYRH (151 aa). N-linked (GlcNAc...) asparagine; by host glycosylation is found at N94, N171, N190, N202, N207, N219, N223, and N255. A disordered region spans residues 222–424; that stretch reads KNQTCAPSKK…TSPSPTPNST (203 aa). Polar residues-rich tracts occupy residues 244 to 259, 278 to 290, and 308 to 331; these read LTST…TTDP, PYTT…KQGL, and GGNN…TAQP. The mucin-like region stretch occupies residues 277–455; sequence EPYTTSDAAT…PFLDGLINAP (179 aa). 12 N-linked (GlcNAc...) asparagine; by host glycosylation sites follow: N310, N313, N326, N337, N344, N345, N350, N360, N397, N408, N422, and N487. The segment covering 337-347 has biased composition (low complexity); it reads NTTTISTNNTS. A compositionally biased stretch (polar residues) spans 348-388; it reads KHNLSTPSVPIQNATNYNTQSTAPENEQTSAPSKTTLLPTE. The span at 389–424 shows a compositional bias: low complexity; it reads NPTTAKSTNSTKSPTTTVPNTTNKYSTSPSPTPNST. Positions 529–549 are fusion peptide; sequence GLSWIPFFGPGIEGLYTAGLI. N-linked (GlcNAc...) asparagine; by host glycosylation is found at N564 and N619. Residues 649–669 traverse the membrane as a helical segment; the sequence is WGVLTNLGILLLLSIAVLIAL. Residues 670–681 lie on the Cytoplasmic side of the membrane; sequence SCICRIFTKYIG. 2 S-palmitoyl cysteine; by host lipidation sites follow: C671 and C673.

The protein belongs to the filoviruses glycoprotein family. In terms of assembly, homotrimer; each monomer consists of a GP1 and a GP2 subunit linked by disulfide bonds. The resulting peplomers (GP1,2) protrude from the virus surface as spikes. GP1,2 interacts with human CD209 and CLEC4M (collectively referred to as DC-SIGN(R)). Asialoglycoprotein receptor (ASGP-R) may be a liver-specific receptor for GP1,2. Members of the Tyro3 receptor tyrosine kinase family may be cell entry factors interacting with GP1,2. N-glycosylated. Post-translationally, O-glycosylated in the mucin-like region. In terms of processing, specific enzymatic cleavages in vivo yield mature proteins. The precursor is processed into GP1 and GP2 by host cell furin in the trans Golgi, and maybe by other host proteases, to yield the mature GP1 and GP2 proteins. The cleavage site corresponds to the furin optimal cleavage sequence [KR]-X-[KR]-R. GP1 is phosphorylated on serine residues between residues 260 and 273.

The protein localises to the virion membrane. The protein resides in the host cell membrane. In terms of biological role, GP1 is responsible for binding to the receptor(s) on target cells. Interacts with CD209/DC-SIGN and CLEC4M/DC-SIGNR which act as cofactors for virus entry into the host cell. Binding to CD209 and CLEC4M, which are respectively found on dendritic cells (DCs), and on endothelial cells of liver sinusoids and lymph node sinuses, facilitate infection of macrophages and endothelial cells. These interactions not only facilitate virus cell entry, but also allow capture of viral particles by DCs and subsequent transmission to susceptible cells without DCs infection (trans infection). GP2 acts as a class I viral fusion protein. Under the current model, the protein has at least 3 conformational states: pre-fusion native state, pre-hairpin intermediate state, and post-fusion hairpin state. During viral and target cell membrane fusion, the coiled coil regions (heptad repeats) assume a trimer-of-hairpins structure, positioning the fusion peptide in close proximity to the C-terminal region of the ectodomain. The formation of this structure appears to drive apposition and subsequent fusion of viral and target cell membranes. Responsible for penetration of the virus into the cell cytoplasm by mediating the fusion of the membrane of the endocytosed virus particle with the endosomal membrane. Low pH in endosomes induces an irreversible conformational change in GP2, releasing the fusion hydrophobic peptide. This Chlorocebus aethiops (Green monkey) protein is Envelope glycoprotein (GP).